The primary structure comprises 1069 residues: Adenylate-forming reductase (1069 aa).

An adenylation (A) domain region spans residues 20 to 391; the sequence is HPEDPKAVKS…WKLRQDINYR (372 aa). Residues His262, 357 to 358, Thr362, and 437 to 440 contribute to the AMP site; these read AH and AVGR. The region spanning 576 to 656 is the Carrier domain; sequence DSLEEDLKDL…KLGASLRHLA (81 aa). Ser612 is modified (O-(pantetheine 4'-phosphoryl)serine). Positions 686-1032 are reductase (R) domain; the sequence is TVLLTGSTGN…TGKVILDTSR (347 aa). Residues 693–696, Arg719, 785–787, Tyr863, and Lys867 contribute to the NADP(+) site; these read TGNL and NAW.

This sequence belongs to the adenylate-forming reductase family.

It catalyses the reaction 5-methylorsellinate + ATP + NADPH + H(+) = 2,4-dihydroxy 5,6-dimethylbenzaldehyde + AMP + diphosphate + NADP(+). It functions in the pathway secondary metabolite biosynthesis. Its function is as follows. Non-canonical non-ribosomal peptide synthetase; part of the cluster A that mediates the biosynthesis of azasperpyranones, members of the azaphilone family that exhibit anti-cancer activities. Azasperpyranones are synthesized by 2 clusters, A and B. Cluster A is responsible for the production of the polyhydric phenol moiety while the azaphilonoid scaffold is produced by the cluster B. The non-reducing polyketide synthase ATEG_03629 produces 5-methyl orsellinic acid, which is then reduced to 5-methyl orsellinic aldehyde by the NRPS-like protein ATEG_03630. 5-methyl orsellinic aldehyde is then first hydroxylated by the FAD-dependent monooxygenase ATEG_03635 and subsequently hydroxylated by the cytochrome P450 monooxygenase ATEG_03631 to produce the unstable polyhydric phenol precursor of azasperpyranones. On the other hand, the polyketide synthase ATEG_07659 is responsible for producing the 3,5-dimethyloctadienone moiety from acetyl-CoA, three malonyl-CoA, and two S-adenosyl methionines (SAM). The 3,5-dimethyloctadienone moiety is then loaded onto the SAT domain of ATEG_07661 and extended with four malonyl-CoA and one SAM, which leads to the formation of 2,4-dihydroxy-6-(5,7-dimethyl-2-oxo-trans-3-trans-5-nonadienyl)-3-methylbenzaldehyde (compound 8) after reductive release and aldol condensation. The FAD-dependent monooxygenase ATEG_07662 is the next enzyme in the biosynthesis sequence and hydroxylates the side chain at the benzylic position of compound 8. In Aspergillus nidulans, afoF, the ortholog of the FAD-dependent oxygenase ATEG_07660, is the key enzyme for the biosynthesis of asperfuranone by catalyzing the hydroxylation at C-8 of to prevent the formation of a six-membered ring hemiacetal intermediate and thus facilitating the formation of a five-membered ring to produce asperfuranone. In Aspergillus terreus, ATEG_07660 is probably not functional, which leads to the formation of the six-membered ring hemiacetal intermediate presperpyranone instead of asperfuranone. Finally, ATEG_03636 is involved in the condensation of the polyhydric phenol moiety produced by cluster A and the perasperpyranone precursor produced by cluster B, to yield azasperpyranone A. Further modifications of azasperpyranone A result in the production of derivatives, including azasperpyranone B to F. The chain is Adenylate-forming reductase from Aspergillus terreus (strain NIH 2624 / FGSC A1156).